The chain runs to 370 residues: tRNA-specific 2-thiouridylase MnmA (370 aa).

ATP contacts are provided by residues 6–13 (AMSGGVDS) and L32. Catalysis depends on C101, which acts as the Nucleophile. A disulfide bridge connects residues C101 and C193. An ATP-binding site is contributed by G125. The segment at 143 to 145 (KDQ) is interaction with tRNA. The Cysteine persulfide intermediate role is filled by C193.

The protein belongs to the MnmA/TRMU family.

It is found in the cytoplasm. The catalysed reaction is S-sulfanyl-L-cysteinyl-[protein] + uridine(34) in tRNA + AH2 + ATP = 2-thiouridine(34) in tRNA + L-cysteinyl-[protein] + A + AMP + diphosphate + H(+). Catalyzes the 2-thiolation of uridine at the wobble position (U34) of tRNA, leading to the formation of s(2)U34. In Rhodococcus erythropolis (strain PR4 / NBRC 100887), this protein is tRNA-specific 2-thiouridylase MnmA.